The primary structure comprises 444 residues: D(2) dopamine receptor (444 aa).

Residues 1–37 (MDPLNLSWYDDDPESRNWSRPFNGSEGKADRPPYNYY) are Extracellular-facing. 3 N-linked (GlcNAc...) asparagine glycosylation sites follow: Asn5, Asn17, and Asn23. A helical membrane pass occupies residues 38-60 (AMLLTLLIFVIVFGNVLVCMAVS). Topologically, residues 61 to 70 (REKALQTTTN) are cytoplasmic. Residues 71-93 (YLIVSLAVADLLVATLVMPWVVY) form a helical membrane-spanning segment. Over 94-108 (LEVVGEWKFSRIHCD) the chain is Extracellular. A disulfide bridge connects residues Cys107 and Cys182. A helical transmembrane segment spans residues 109-130 (IFVTLDVMMCTASILNLCAISI). The Cytoplasmic portion of the chain corresponds to 131–151 (DRYTAVAMPMLYNTRYSSKRR). The chain crosses the membrane as a helical span at residues 152-172 (VTVMIAIVWVLSFTISCPMLF). The Extracellular segment spans residues 173–188 (GLNNTDQNECIIANPA). A helical membrane pass occupies residues 189–213 (FVVYSSIVSFYVPFIVTLLVYIKIY). The interval 211 to 374 (KIYIVLRRRR…SQQKEKKATQ (164 aa)) is interaction with PPP1R9B. The Cytoplasmic segment spans residues 214-374 (IVLRRRRKRV…SQQKEKKATQ (161 aa)). The disordered stretch occupies residues 281–332 (MEMLSSTSPPERTRYSPIPPSHHQLTLPDPSHHGLHSTPDSPAKPEKNGHAK). A helical transmembrane segment spans residues 375–396 (MLAIVLGVFIICWLPFFITHIL). The Extracellular portion of the chain corresponds to 397–410 (NIHCDCNIPPVLYS). Cysteines 400 and 402 form a disulfide. Residues 411 to 432 (AFTWLGYVNSAVNPIIYTTFNI) form a helical membrane-spanning segment. Topologically, residues 433–444 (EFRKAFLKILHC) are cytoplasmic. A lipid anchor (S-palmitoyl cysteine) is attached at Cys444.

Belongs to the G-protein coupled receptor 1 family. Forms homo- and heterooligomers with DRD4. The interaction with DRD4 may modulate agonist-induced downstream signaling. Interacts with CADPS and CADPS2. Interacts with GPRASP1, PPP1R9B and CLIC6. Interacts with ARRB2. Interacts with HTR2A. Interacts with DRD1. Interacts with KCNA2. In terms of processing, palmitoylated. Palmitoylation which is required for proper localization to the plasma membrane and stability of the receptor could be carried on by ZDHHC4, ZDHHC3 and ZDHHC8.

Its subcellular location is the cell membrane. It localises to the golgi apparatus membrane. Dopamine receptor whose activity is mediated by G proteins which inhibit adenylyl cyclase. Positively regulates postnatal regression of retinal hyaloid vessels via suppression of VEGFR2/KDR activity, downstream of OPN5. The polypeptide is D(2) dopamine receptor (DRD2) (Bos taurus (Bovine)).